The chain runs to 84 residues: Small ribosomal subunit protein eS27 (84 aa).

Basic and acidic residues predominate over residues 1–16; the sequence is MPLAKDLLHPSPEEEK. Residues 1–23 form a disordered region; it reads MPLAKDLLHPSPEEEKRKHKKKR. The residue at position 11 (Ser-11) is a Phosphoserine. The C4-type zinc finger occupies 38–60; it reads PGCYKITTVFSHAQTVVLCVGCS.

This sequence belongs to the eukaryotic ribosomal protein eS27 family. In terms of assembly, component of the small ribosomal subunit. Part of the small subunit (SSU) processome, composed of more than 70 proteins and the RNA chaperone small nucleolar RNA (snoRNA) U3. Zn(2+) is required as a cofactor.

It is found in the cytoplasm. The protein localises to the nucleus. It localises to the nucleolus. In terms of biological role, component of the small ribosomal subunit. The ribosome is a large ribonucleoprotein complex responsible for the synthesis of proteins in the cell. Required for proper rRNA processing and maturation of 18S rRNAs. Part of the small subunit (SSU) processome, first precursor of the small eukaryotic ribosomal subunit. During the assembly of the SSU processome in the nucleolus, many ribosome biogenesis factors, an RNA chaperone and ribosomal proteins associate with the nascent pre-rRNA and work in concert to generate RNA folding, modifications, rearrangements and cleavage as well as targeted degradation of pre-ribosomal RNA by the RNA exosome. This chain is Small ribosomal subunit protein eS27, found in Mus musculus (Mouse).